A 360-amino-acid polypeptide reads, in one-letter code: DNA replication and repair protein RecF (360 aa).

33 to 40 lines the ATP pocket; sequence GENGSGKT.

The protein belongs to the RecF family.

It localises to the cytoplasm. Functionally, the RecF protein is involved in DNA metabolism; it is required for DNA replication and normal SOS inducibility. RecF binds preferentially to single-stranded, linear DNA. It also seems to bind ATP. The chain is DNA replication and repair protein RecF from Rickettsia africae (strain ESF-5).